Consider the following 128-residue polypeptide: Holo-[acyl-carrier-protein] synthase (128 aa).

Residues Asp-7 and Glu-55 each coordinate Mg(2+).

The protein belongs to the P-Pant transferase superfamily. AcpS family. The cofactor is Mg(2+).

Its subcellular location is the cytoplasm. The enzyme catalyses apo-[ACP] + CoA = holo-[ACP] + adenosine 3',5'-bisphosphate + H(+). Functionally, transfers the 4'-phosphopantetheine moiety from coenzyme A to a Ser of acyl-carrier-protein. This is Holo-[acyl-carrier-protein] synthase from Moorella thermoacetica (strain ATCC 39073 / JCM 9320).